The following is a 157-amino-acid chain: MKCPHCGNNGSRVVDSRPTDEGRVIRRRRECEKCGFRFTTFERVEATPLLVIKKNGSREEFDRDKILKGIVRAAEKRPLNMEQMTDMVDKVENKVRSLGESEISSQIIGEYVMNILVDLDEIAYIRFASVYRQFKDMHVFLDELQDMMKKDEEKEKE.

Residues 1–21 form a disordered region; it reads MKCPHCGNNGSRVVDSRPTDE. A zinc finger lies at 3–34; it reads CPHCGNNGSRVVDSRPTDEGRVIRRRRECEKC. The ATP-cone domain maps to 49-139; the sequence is LLVIKKNGSR…VYRQFKDMHV (91 aa).

This sequence belongs to the NrdR family. Zn(2+) is required as a cofactor.

Negatively regulates transcription of bacterial ribonucleotide reductase nrd genes and operons by binding to NrdR-boxes. The protein is Transcriptional repressor NrdR of Pediococcus pentosaceus (strain ATCC 25745 / CCUG 21536 / LMG 10740 / 183-1w).